The following is a 346-amino-acid chain: Small ribosomal subunit biogenesis GTPase RsgA (346 aa).

A disordered region spans residues 1–26 (MAKRKLTQNQTRRIQSNNAKTLHRHK). Residues 7–20 (TQNQTRRIQSNNAK) are compositionally biased toward polar residues. The region spanning 103 to 271 (ENEISRPDYY…LIDSPGIREF (169 aa)) is the CP-type G domain. Residues 159-162 (NKVD) and 213-221 (GQSGVGKSS) each bind GTP. Residues Cys-295, Cys-300, His-302, and Cys-308 each coordinate Zn(2+).

Belongs to the TRAFAC class YlqF/YawG GTPase family. RsgA subfamily. As to quaternary structure, monomer. Associates with 30S ribosomal subunit, binds 16S rRNA. Zn(2+) is required as a cofactor.

The protein resides in the cytoplasm. Functionally, one of several proteins that assist in the late maturation steps of the functional core of the 30S ribosomal subunit. Helps release RbfA from mature subunits. May play a role in the assembly of ribosomal proteins into the subunit. Circularly permuted GTPase that catalyzes slow GTP hydrolysis, GTPase activity is stimulated by the 30S ribosomal subunit. This Haemophilus influenzae (strain PittEE) protein is Small ribosomal subunit biogenesis GTPase RsgA.